The primary structure comprises 128 residues: Translation initiation factor 5A (128 aa).

Lys-35 is subject to Hypusine.

Belongs to the eIF-5A family.

It is found in the cytoplasm. Functionally, functions by promoting the formation of the first peptide bond. The protein is Translation initiation factor 5A (eif5a) of Archaeoglobus fulgidus (strain ATCC 49558 / DSM 4304 / JCM 9628 / NBRC 100126 / VC-16).